Reading from the N-terminus, the 46-residue chain is Esculentin-1a/b (46 aa).

A disulfide bond links cysteine 40 and cysteine 46.

It belongs to the frog skin active peptide (FSAP) family. Esculentin subfamily. As to expression, expressed by the skin glands.

The protein resides in the secreted. In terms of biological role, antimicrobial peptide. Stimulates insulin secretion by BRIN-BD11 cells in vitro. Shows hemolytic activity. The polypeptide is Esculentin-1a/b (Pelophylax ridibundus (Marsh frog)).